We begin with the raw amino-acid sequence, 151 residues long: ATP synthase subunit b' (151 aa).

The chain crosses the membrane as a helical span at residues 18–38 (TLPLMALQVVLLTFILNALFF).

The protein belongs to the ATPase B chain family. F-type ATPases have 2 components, F(1) - the catalytic core - and F(0) - the membrane proton channel. F(1) has five subunits: alpha(3), beta(3), gamma(1), delta(1), epsilon(1). F(0) has four main subunits: a(1), b(1), b'(1) and c(10-14). The alpha and beta chains form an alternating ring which encloses part of the gamma chain. F(1) is attached to F(0) by a central stalk formed by the gamma and epsilon chains, while a peripheral stalk is formed by the delta, b and b' chains.

The protein resides in the cellular thylakoid membrane. Functionally, f(1)F(0) ATP synthase produces ATP from ADP in the presence of a proton or sodium gradient. F-type ATPases consist of two structural domains, F(1) containing the extramembraneous catalytic core and F(0) containing the membrane proton channel, linked together by a central stalk and a peripheral stalk. During catalysis, ATP synthesis in the catalytic domain of F(1) is coupled via a rotary mechanism of the central stalk subunits to proton translocation. Its function is as follows. Component of the F(0) channel, it forms part of the peripheral stalk, linking F(1) to F(0). The b'-subunit is a diverged and duplicated form of b found in plants and photosynthetic bacteria. This chain is ATP synthase subunit b', found in Prochlorococcus marinus (strain MIT 9303).